A 508-amino-acid chain; its full sequence is Lysine-specific permease LysP (508 aa).

Transmembrane regions (helical) follow at residues 43–63, 66–86, 112–132, 144–164, 184–204, 219–239, 270–290, 314–334, 367–387, 393–413, 436–456, and 467–487; these read SMIA…GDVI, AGPF…YFLM, PAFG…TVAV, WLPD…VFSI, ITVV…IMGG, FVGG…LLVA, IFWR…AIIP, VGFS…VVSA, IPFI…LTSI, FTLL…GIAI, AKLF…VTLG, and WVQG…YLGY.

The protein belongs to the amino acid-polyamine-organocation (APC) superfamily. Amino acid transporter (AAT) (TC 2.A.3.1) family.

The protein localises to the cell membrane. It catalyses the reaction L-lysine(out) + H(+)(out) = L-lysine(in) + H(+)(in). Its function is as follows. Permease involved in lysine uptake. The chain is Lysine-specific permease LysP from Lactococcus lactis subsp. cremoris (strain MG1363).